Here is a 770-residue protein sequence, read N- to C-terminus: Proton-coupled zinc antiporter SLC30A5 (770 aa).

At 1–29 (MEEKYSSQALAGGGVLGPVDVPSARLTRY) the chain is on the cytoplasmic side. A helical transmembrane segment spans residues 30-50 (IVLLCFAKFLKAVGLFESYDL). The Lumenal portion of the chain corresponds to 51 to 53 (LKA). A helical transmembrane segment spans residues 54–74 (VHLVQFIFIVKLGSAFFMVLF). Topologically, residues 75–95 (QKPFSSGKVVTKHQWIKIFKH) are cytoplasmic. Residues 96-116 (AVVGCIISLLWFFGLTLCGPL) form a helical membrane-spanning segment. Position 117 (Arg-117) is a topological domain, lumenal. The helical transmembrane segment at 118–138 (TLLLFEHSDVVVLSLLSVLFT) threads the bilayer. At 139–149 (SSGGGPAKTRG) the chain is on the cytoplasmic side. The helical transmembrane segment at 150-170 (AAFFIIAVICLLLFDNDDLMA) threads the bilayer. Topologically, residues 171-190 (KIAEHPEGHHDSALTHVLYT) are lumenal. A helical membrane pass occupies residues 191–211 (VIAFLGVADHKGGVLLLVLAL). Residues 212–235 (CCKVGFHMASRKLSVDVGGAKRLQ) lie on the Cytoplasmic side of the membrane. The chain crosses the membrane as a helical span at residues 236–256 (ALSHLVSVLLLCPWVIVLSLT). Over 257-264 (TESKVESW) the chain is Lumenal. The chain crosses the membrane as a helical span at residues 265–285 (SSLIMPFITVIFFVVILDFYV). Residues 286 to 300 (ESICSVKMESSKCAR) lie on the Cytoplasmic side of the membrane. The helical transmembrane segment at 301–321 (YGSFLIFISALLFGNFWTHPI) threads the bilayer. Topologically, residues 322–339 (TDQLRAMNKPAHHESTEH) are lumenal. A helical membrane pass occupies residues 340–360 (VLSGGVVVSAVFFILSANILS). The Cytoplasmic portion of the chain corresponds to 361–415 (SPSRKGQKGTLIGYSPEGTPLYNFMGDAIQQSSQSLPRFIKESLKQILEEYDSRQ). The helical transmembrane segment at 416–436 (IFYFLCLNLAFTFVELFYGVW) threads the bilayer. The Lumenal segment spans residues 437–445 (TNSLGLISD). Residues 446–466 (GFHMLFDCSALVMGLFAALMT) form a helical membrane-spanning segment. Residues His-448 and Asp-452 each contribute to the Zn(2+) site. At 467–480 (RWKATRIFSYGYGR) the chain is on the cytoplasmic side. A helical membrane pass occupies residues 481–501 (VEILSGFINGLFLMVIAFFVF). Over 502-517 (MESVARLVDPPDIDTN) the chain is Lumenal. Residues 518-538 (MLTPVSVGGLIVNLVGICAFS) form a helical membrane-spanning segment. The tract at residues 539–579 (HAHSHGASRGGCHSHEHSHSYHGHSHSHGHGHSHNDHGHSH) is his-rich loop; required for zinc transport. The Cytoplasmic portion of the chain corresponds to 539 to 597 (HAHSHGASRGGCHSHEHSHSYHGHSHSHGHGHSHNDHGHSHGHSHVSSGGGMNTNMRGV). Residues 548-586 (GGCHSHEHSHSYHGHSHSHGHGHSHNDHGHSHGHSHVSS) are disordered. Residues 558–570 (SYHGHSHSHGHGH) show a composition bias toward basic residues. A helical membrane pass occupies residues 598–618 (FLHVLADTLGSVGVIVSTTFI). Residues His-600 and Asp-604 each coordinate Zn(2+). The Lumenal portion of the chain corresponds to 619–622 (QQFG). Residues 623–643 (WLIADPLCSLFIATLIFLSVI) form a helical membrane-spanning segment. Topologically, residues 644–770 (PLLKDACQVL…KYYKDGTYIM (127 aa)) are cytoplasmic.

Belongs to the cation diffusion facilitator (CDF) transporter (TC 2.A.4) family. SLC30A subfamily. As to quaternary structure, heterodimer with SLC30A6/ZNT6; form a functional zinc ion transmembrane transporter.

Its subcellular location is the golgi apparatus. It is found in the golgi stack membrane. It localises to the cytoplasmic vesicle. The protein resides in the COPII-coated vesicle membrane. The protein localises to the secretory vesicle membrane. Its subcellular location is the trans-Golgi network membrane. The catalysed reaction is Zn(2+)(in) + 2 H(+)(out) = Zn(2+)(out) + 2 H(+)(in). In terms of biological role, together with SLC30A6 forms a functional proton-coupled zinc ion antiporter mediating zinc entry into the lumen of organelles along the secretory pathway. By contributing to zinc ion homeostasis within the early secretory pathway, regulates the activation and folding of enzymes like alkaline phosphatases and enzymes involved in phosphatidylinositol glycan anchor biosynthesis. The protein is Proton-coupled zinc antiporter SLC30A5 of Gallus gallus (Chicken).